The primary structure comprises 345 residues: Phosphoribosylformylglycinamidine cyclo-ligase (345 aa).

Belongs to the AIR synthase family.

The protein resides in the cytoplasm. The catalysed reaction is 2-formamido-N(1)-(5-O-phospho-beta-D-ribosyl)acetamidine + ATP = 5-amino-1-(5-phospho-beta-D-ribosyl)imidazole + ADP + phosphate + H(+). It functions in the pathway purine metabolism; IMP biosynthesis via de novo pathway; 5-amino-1-(5-phospho-D-ribosyl)imidazole from N(2)-formyl-N(1)-(5-phospho-D-ribosyl)glycinamide: step 2/2. This Sodalis glossinidius (strain morsitans) protein is Phosphoribosylformylglycinamidine cyclo-ligase.